Consider the following 78-residue polypeptide: uncharacterized protein (78 aa).

This is an uncharacterized protein from Dictyostelium discoideum (Social amoeba).